Here is a 360-residue protein sequence, read N- to C-terminus: UDP-D-xylose:L-fucose alpha-1,3-D-xylosyltransferase MGP4 (360 aa).

The disordered stretch occupies residues 1–25 (MAQQKFLHQRPIQNPFTNPFSSSPL). Topologically, residues 1–41 (MAQQKFLHQRPIQNPFTNPFSSSPLSTSSISNRPISLLSRN) are cytoplasmic. The segment covering 14–25 (NPFTNPFSSSPL) has biased composition (low complexity). Residues 42–62 (GLLLLLALLVILGVFLPWAGS) traverse the membrane as a helical; Signal-anchor for type II membrane protein segment. Residues 63-360 (PLFPSPNKLS…ASESPLGKLE (298 aa)) are Lumenal-facing. 2 N-linked (GlcNAc...) asparagine glycosylation sites follow: Asn-93 and Asn-168. The DXD motif motif lies at 191 to 193 (DVD). 2 N-linked (GlcNAc...) asparagine glycosylation sites follow: Asn-285 and Asn-310.

This sequence belongs to the glycosyltransferase 77 family. Mn(2+) is required as a cofactor. Requires Mg(2+) as cofactor. As to expression, widely expressed.

It localises to the golgi apparatus membrane. In terms of biological role, catalyzes the transfer of D-xylose from UDP-alpha-D-xylose onto L-fucose. Probably involved in the biosynthesis of rhamnogalacturonan II (RG-II) through xylosylation of the internal fucose moiety of the A-chain of RG-II, a structurally complex pectic polysaccharide of the primary cell wall. RG-II is essential for the cell wall integrity of rapidly growing tissues such as roots and pollen tube growth and elongation. In Arabidopsis thaliana (Mouse-ear cress), this protein is UDP-D-xylose:L-fucose alpha-1,3-D-xylosyltransferase MGP4.